A 67-amino-acid polypeptide reads, in one-letter code: Kappa-conotoxin-like 2 (67 aa).

The N-terminal stretch at 1–26 (MMFRLTSVSCFLLVIACLNLFQVVLT) is a signal peptide. 4 disulfide bridges follow: Cys-29/Cys-43, Cys-36/Cys-48, Cys-42/Cys-51, and Cys-47/Cys-55. Phe-59 carries the phenylalanine amide modification. A propeptide spanning residues 63–67 (ATFQE) is cleaved from the precursor.

Belongs to the conotoxin I2 superfamily. In terms of tissue distribution, expressed by the venom duct.

The protein localises to the secreted. Inhibits the vertebrate voltage-gated potassium channels Kv1.1/KCNA1 and Kv1.3/KCNA3. In Conus vexillum (Flag cone), this protein is Kappa-conotoxin-like 2.